The sequence spans 201 residues: ATP synthase subunit delta, chloroplastic (201 aa).

The protein belongs to the ATPase delta chain family. In terms of assembly, F-type ATPases have 2 components, F(1) - the catalytic core - and F(0) - the membrane proton channel. F(1) has five subunits: alpha(3), beta(3), gamma(1), delta(1), epsilon(1). CF(0) has four main subunits: a(1), b(1), b'(1) and c(10-14). The alpha and beta chains form an alternating ring which encloses part of the gamma chain. F(1) is attached to F(0) by a central stalk formed by the gamma and epsilon chains, while a peripheral stalk is formed by the delta, b and b' chains.

It localises to the plastid. Its subcellular location is the chloroplast thylakoid membrane. Its function is as follows. F(1)F(0) ATP synthase produces ATP from ADP in the presence of a proton or sodium gradient. F-type ATPases consist of two structural domains, F(1) containing the extramembraneous catalytic core and F(0) containing the membrane proton channel, linked together by a central stalk and a peripheral stalk. During catalysis, ATP synthesis in the catalytic domain of F(1) is coupled via a rotary mechanism of the central stalk subunits to proton translocation. In terms of biological role, this protein is part of the stalk that links CF(0) to CF(1). It either transmits conformational changes from CF(0) to CF(1) or is implicated in proton conduction. The sequence is that of ATP synthase subunit delta, chloroplastic from Vaucheria litorea (Yellow-green alga).